The sequence spans 622 residues: 1-deoxy-D-xylulose-5-phosphate synthase (622 aa).

Thiamine diphosphate contacts are provided by residues H80 and 121-123 (GHS). D152 contacts Mg(2+). Thiamine diphosphate is bound by residues 153–154 (GA), N181, Y288, and E370. N181 is a Mg(2+) binding site.

Belongs to the transketolase family. DXPS subfamily. In terms of assembly, homodimer. Mg(2+) is required as a cofactor. Requires thiamine diphosphate as cofactor.

It carries out the reaction D-glyceraldehyde 3-phosphate + pyruvate + H(+) = 1-deoxy-D-xylulose 5-phosphate + CO2. The protein operates within metabolic intermediate biosynthesis; 1-deoxy-D-xylulose 5-phosphate biosynthesis; 1-deoxy-D-xylulose 5-phosphate from D-glyceraldehyde 3-phosphate and pyruvate: step 1/1. In terms of biological role, catalyzes the acyloin condensation reaction between C atoms 2 and 3 of pyruvate and glyceraldehyde 3-phosphate to yield 1-deoxy-D-xylulose-5-phosphate (DXP). The sequence is that of 1-deoxy-D-xylulose-5-phosphate synthase from Shewanella baltica (strain OS185).